The chain runs to 195 residues: UPF0301 protein CCNA_03506 (195 aa).

This sequence belongs to the UPF0301 (AlgH) family.

The polypeptide is UPF0301 protein CCNA_03506 (Caulobacter vibrioides (strain NA1000 / CB15N) (Caulobacter crescentus)).